We begin with the raw amino-acid sequence, 426 residues long: Histidine--tRNA ligase (426 aa).

The protein belongs to the class-II aminoacyl-tRNA synthetase family. Homodimer.

It is found in the cytoplasm. The enzyme catalyses tRNA(His) + L-histidine + ATP = L-histidyl-tRNA(His) + AMP + diphosphate + H(+). In Hydrogenovibrio crunogenus (strain DSM 25203 / XCL-2) (Thiomicrospira crunogena), this protein is Histidine--tRNA ligase.